We begin with the raw amino-acid sequence, 82 residues long: ATP synthase subunit c (82 aa).

The next 2 membrane-spanning stretches (helical) occupy residues 18–38 and 61–81; these read LGEALGAGLAVIGAGLGIGKI and IIAAALVEGVSLFAVVVCGFL.

It belongs to the ATPase C chain family. In terms of assembly, F-type ATPases have 2 components, F(1) - the catalytic core - and F(0) - the membrane proton channel. F(1) has five subunits: alpha(3), beta(3), gamma(1), delta(1), epsilon(1). F(0) has three main subunits: a(1), b(2) and c(10-14). The alpha and beta chains form an alternating ring which encloses part of the gamma chain. F(1) is attached to F(0) by a central stalk formed by the gamma and epsilon chains, while a peripheral stalk is formed by the delta and b chains.

The protein localises to the cell inner membrane. F(1)F(0) ATP synthase produces ATP from ADP in the presence of a proton or sodium gradient. F-type ATPases consist of two structural domains, F(1) containing the extramembraneous catalytic core and F(0) containing the membrane proton channel, linked together by a central stalk and a peripheral stalk. During catalysis, ATP synthesis in the catalytic domain of F(1) is coupled via a rotary mechanism of the central stalk subunits to proton translocation. Its function is as follows. Key component of the F(0) channel; it plays a direct role in translocation across the membrane. A homomeric c-ring of between 10-14 subunits forms the central stalk rotor element with the F(1) delta and epsilon subunits. This is ATP synthase subunit c from Azobacteroides pseudotrichonymphae genomovar. CFP2.